The sequence spans 413 residues: MDIEIIRKTDPEIAEVILKELNRQRNKIELIASENFVSRAVMEAMGTPLTNKYAEGYPGRRYYGGCEYVDMAEELARERLKKLFGAEHANVQPHSGAQANMAAYFALLKPGDTVLGMDLAHGGHLTHGSKVNFSGQIYNFVSYGVREDTGYIDYDQVEDLAKKHKPKLIVAGASAYPRIIDFKKFREIADKVGAYLMVDMAHIAGLVAAGLHPNPVPYADVVTTTTHKTLRGPRGGAILCKQEHAKAIDKALFPGTQGGPLMHIIAAKAVCFKEALSDEFKEYQKRIVENAKALANALMERGINLVSGGTDNHLMLLDLRNTGITGKELETRLDEVNITCNKNAIPFDPLGPNVTSGVRLGTPAVTTRGMKPEDMVEIADIIANMIKDENYKEKAKERVAKLLEKYPLYPDLL.

(6S)-5,6,7,8-tetrahydrofolate contacts are provided by residues leucine 119 and 123-125 (GHL). Lysine 228 is modified (N6-(pyridoxal phosphate)lysine).

It belongs to the SHMT family. Homodimer. Pyridoxal 5'-phosphate is required as a cofactor.

It localises to the cytoplasm. It catalyses the reaction (6R)-5,10-methylene-5,6,7,8-tetrahydrofolate + glycine + H2O = (6S)-5,6,7,8-tetrahydrofolate + L-serine. It functions in the pathway one-carbon metabolism; tetrahydrofolate interconversion. Its pathway is amino-acid biosynthesis; glycine biosynthesis; glycine from L-serine: step 1/1. In terms of biological role, catalyzes the reversible interconversion of serine and glycine with tetrahydrofolate (THF) serving as the one-carbon carrier. This reaction serves as the major source of one-carbon groups required for the biosynthesis of purines, thymidylate, methionine, and other important biomolecules. Also exhibits THF-independent aldolase activity toward beta-hydroxyamino acids, producing glycine and aldehydes, via a retro-aldol mechanism. The chain is Serine hydroxymethyltransferase from Caldanaerobacter subterraneus subsp. tengcongensis (strain DSM 15242 / JCM 11007 / NBRC 100824 / MB4) (Thermoanaerobacter tengcongensis).